The primary structure comprises 37 residues: ADDKNPLEECFRETDYEEFLEIARNGLKATSNPKRVV.

It belongs to the flavin monoamine oxidase family. FIG1 subfamily. As to quaternary structure, homodimer; non-covalently linked. Requires FAD as cofactor. Post-translationally, N-Glycosylated. In terms of tissue distribution, expressed by the venom gland.

The protein resides in the secreted. It catalyses the reaction an L-alpha-amino acid + O2 + H2O = a 2-oxocarboxylate + H2O2 + NH4(+). It carries out the reaction L-leucine + O2 + H2O = 4-methyl-2-oxopentanoate + H2O2 + NH4(+). The catalysed reaction is L-phenylalanine + O2 + H2O = 3-phenylpyruvate + H2O2 + NH4(+). The enzyme catalyses L-tryptophan + O2 + H2O = indole-3-pyruvate + H2O2 + NH4(+). It catalyses the reaction L-methionine + O2 + H2O = 4-methylsulfanyl-2-oxobutanoate + H2O2 + NH4(+). It carries out the reaction L-isoleucine + O2 + H2O = (S)-3-methyl-2-oxopentanoate + H2O2 + NH4(+). The catalysed reaction is L-arginine + O2 + H2O = 5-guanidino-2-oxopentanoate + H2O2 + NH4(+). The enzyme catalyses L-histidine + O2 + H2O = 3-(imidazol-5-yl)pyruvate + H2O2 + NH4(+). It catalyses the reaction L-valine + O2 + H2O = 3-methyl-2-oxobutanoate + H2O2 + NH4(+). Functionally, catalyzes an oxidative deamination of predominantly hydrophobic and aromatic L-amino acids, thus producing hydrogen peroxide that may contribute to the diverse toxic effects of this enzyme. Is highly active on L-Leu, L-Met, moderately active on L-Arg, L-Trp, L-Phe, L-Val, L-His, and L-Ile, and is weakly or not active on L-Cys, L-Lys, L-Ala, L-Thr, L-Asp, L-Ser, and L-Pro. Exhibits diverse biological activities, such as hemorrhage, edema, apoptosis of vascular endothelial cells or tumor cell lines, as well as regulation of platelet aggregation. Effects of snake L-amino oxidases on platelets are controversial, since they either induce aggregation or inhibit agonist-induced aggregation. These different effects are probably due to different experimental conditions. This protein induce hemolysis and has antibacterial and antiparasitic activities (against the Gram-positive S.aureus). Tested in vivo, this protein significantly inhibits Ehrlich ascite tumors growth and induces an influx of polymorphonuclear cells, as well as spontaneous liberation of hydrogen peroxide from peritoneal macrophages. The polypeptide is L-amino-acid oxidase (Bothrops jararaca (Jararaca)).